Consider the following 289-residue polypeptide: 4-diphosphocytidyl-2-C-methyl-D-erythritol kinase (289 aa).

Lys-10 is a catalytic residue. 94–104 contributes to the ATP binding site; sequence PVAAGLAGGSS. The active site involves Asp-136.

Belongs to the GHMP kinase family. IspE subfamily.

The enzyme catalyses 4-CDP-2-C-methyl-D-erythritol + ATP = 4-CDP-2-C-methyl-D-erythritol 2-phosphate + ADP + H(+). It functions in the pathway isoprenoid biosynthesis; isopentenyl diphosphate biosynthesis via DXP pathway; isopentenyl diphosphate from 1-deoxy-D-xylulose 5-phosphate: step 3/6. Its function is as follows. Catalyzes the phosphorylation of the position 2 hydroxy group of 4-diphosphocytidyl-2C-methyl-D-erythritol. In Bacillus velezensis (strain DSM 23117 / BGSC 10A6 / LMG 26770 / FZB42) (Bacillus amyloliquefaciens subsp. plantarum), this protein is 4-diphosphocytidyl-2-C-methyl-D-erythritol kinase.